The sequence spans 361 residues: Phospho-N-acetylmuramoyl-pentapeptide-transferase (361 aa).

10 consecutive transmembrane segments (helical) span residues 27–47, 72–92, 94–114, 133–153, 169–189, 200–220, 237–257, 264–284, 289–309, and 338–358; these read GAIVTAVLFVFLFGPGIISTL, TPTMGGLMIFSGLIVATLLWA, LSNLYVWVVLFVTTGFGLIGF, ARLAIEALIAGIAVVLMINAG, LLLDLGWFFVVFGAFVIVAAG, GLAIVPVMIAAASFGMISYLS, VGELAVICGAIIGAGLGFLWF, IFMGDTGSLALGGLLGSIAVA, IVLAVIGGLFVLEAVSVIVQV, and QVVIRFWIIAVVLALLGLATL.

Belongs to the glycosyltransferase 4 family. MraY subfamily. It depends on Mg(2+) as a cofactor.

The protein localises to the cell inner membrane. The catalysed reaction is UDP-N-acetyl-alpha-D-muramoyl-L-alanyl-gamma-D-glutamyl-meso-2,6-diaminopimeloyl-D-alanyl-D-alanine + di-trans,octa-cis-undecaprenyl phosphate = di-trans,octa-cis-undecaprenyl diphospho-N-acetyl-alpha-D-muramoyl-L-alanyl-D-glutamyl-meso-2,6-diaminopimeloyl-D-alanyl-D-alanine + UMP. Its pathway is cell wall biogenesis; peptidoglycan biosynthesis. Its function is as follows. Catalyzes the initial step of the lipid cycle reactions in the biosynthesis of the cell wall peptidoglycan: transfers peptidoglycan precursor phospho-MurNAc-pentapeptide from UDP-MurNAc-pentapeptide onto the lipid carrier undecaprenyl phosphate, yielding undecaprenyl-pyrophosphoryl-MurNAc-pentapeptide, known as lipid I. This chain is Phospho-N-acetylmuramoyl-pentapeptide-transferase, found in Azorhizobium caulinodans (strain ATCC 43989 / DSM 5975 / JCM 20966 / LMG 6465 / NBRC 14845 / NCIMB 13405 / ORS 571).